A 158-amino-acid chain; its full sequence is PTS system fructose-specific EIIB component (158 aa).

The 98-residue stretch at 1–98 (MKLVAVTSCP…AEAVVQKAVE (98 aa)) folds into the PTS EIIB type-2 domain. The active-site Phosphocysteine intermediate is cysteine 9. At cysteine 9 the chain carries Phosphocysteine; by EIIA. The disordered stretch occupies residues 104 to 147 (KTGSVTFGSGDDGEDADVGADDSSDDADAAESDEPVRRGGDPEK). Residues 114-136 (DDGEDADVGADDSSDDADAAESD) show a composition bias toward acidic residues. A compositionally biased stretch (basic and acidic residues) spans 137–147 (EPVRRGGDPEK).

Its subcellular location is the cytoplasm. The enzyme catalyses D-fructose(out) + N(pros)-phospho-L-histidyl-[protein] = D-fructose 1-phosphate(in) + L-histidyl-[protein]. Functionally, the phosphoenolpyruvate-dependent sugar phosphotransferase system (sugar PTS), a major carbohydrate active transport system, catalyzes the phosphorylation of incoming sugar substrates concomitantly with their translocation across the cell membrane. The enzyme II PtfABC PTS system is involved in fructose transport. This is PTS system fructose-specific EIIB component from Haloferax volcanii (strain ATCC 29605 / DSM 3757 / JCM 8879 / NBRC 14742 / NCIMB 2012 / VKM B-1768 / DS2) (Halobacterium volcanii).